Consider the following 311-residue polypeptide: T-cell immunomodulatory protein (311 aa).

Residues asparagine 52, asparagine 70, and asparagine 181 are each glycosylated (N-linked (GlcNAc...) asparagine). A helical transmembrane segment spans residues 266 to 286 (VLLTAIALIGVCVFILAIIGI).

It belongs to the TIP family. As to quaternary structure, interacts with RUVBL1, RUVBL2 and alpha-tubulin.

Its subcellular location is the secreted. The protein resides in the cell membrane. Its function is as follows. Modulator of T-cell function. Has a protective effect in graft versus host disease model. The protein is T-cell immunomodulatory protein of Macaca fascicularis (Crab-eating macaque).